The primary structure comprises 122 residues: Large ribosomal subunit protein uL14 (122 aa).

The protein belongs to the universal ribosomal protein uL14 family. Part of the 50S ribosomal subunit. Forms a cluster with proteins L3 and L19. In the 70S ribosome, L14 and L19 interact and together make contacts with the 16S rRNA in bridges B5 and B8.

Binds to 23S rRNA. Forms part of two intersubunit bridges in the 70S ribosome. In Chlorobaculum parvum (strain DSM 263 / NCIMB 8327) (Chlorobium vibrioforme subsp. thiosulfatophilum), this protein is Large ribosomal subunit protein uL14.